The primary structure comprises 388 residues: MNKQIFVLYFNIFLIFLGIGLVIPVLPVYLKDLGLTGSDLGLLVAAFALSQMIISPFGGTLADKLGKKLIICIGLILFSVSEFMFAVGHNFSVLMLSRVIGGMSAGMVMPGVTGLIADISPSHQKAKNFGYMSAIINSGFILGPGIGGFMAEVSHRMPFYFAGALGILAFIMSIVLIHDPKKSTTSGFQKLEPQLLTKINWKVFITPVILTLVLSFGLSAFETLYSLYTADKVNYSPKDISIAITGGGIFGALFQIYFFDKFMKYFSELTFIAWSLLYSVVVLILLVFANGYWSIMLISFVVFIGFDMIRPAITNYFSNIAGERQGFAGGLNSTFTSMGNFIGPLIAGALFDVHIEAPIYMAIGVSLAGVVIVLIEKQHRAKLKEQNM.

12 helical membrane passes run 5–25, 42–62, 69–89, 99–119, 129–149, 157–177, 201–221, 239–259, 269–289, 293–313, 331–351, and 355–375; these read IFVL…VIPV, LLVA…GTLA, LIIC…AVGH, VIGG…IADI, FGYM…IGGF, MPFY…IVLI, WKVF…LSAF, DISI…IYFF, LTFI…LVFA, WSIM…RPAI, LNST…GALF, and IEAP…IVLI.

Belongs to the major facilitator superfamily. TCR/Tet family.

The protein resides in the cell membrane. Functionally, involved in quinolone resistance. May constitute a membrane-associated active efflux pump of hydrophilic quinolones. In Staphylococcus aureus (strain Mu50 / ATCC 700699), this protein is Quinolone resistance protein NorA (norA).